Consider the following 467-residue polypeptide: ATP synthase subunit beta (467 aa).

154–161 is a binding site for ATP; it reads GGAGVGKT.

This sequence belongs to the ATPase alpha/beta chains family. In terms of assembly, F-type ATPases have 2 components, CF(1) - the catalytic core - and CF(0) - the membrane proton channel. CF(1) has five subunits: alpha(3), beta(3), gamma(1), delta(1), epsilon(1). CF(0) has three main subunits: a(1), b(2) and c(9-12). The alpha and beta chains form an alternating ring which encloses part of the gamma chain. CF(1) is attached to CF(0) by a central stalk formed by the gamma and epsilon chains, while a peripheral stalk is formed by the delta and b chains.

The protein resides in the cell inner membrane. It carries out the reaction ATP + H2O + 4 H(+)(in) = ADP + phosphate + 5 H(+)(out). Its function is as follows. Produces ATP from ADP in the presence of a proton gradient across the membrane. The catalytic sites are hosted primarily by the beta subunits. The polypeptide is ATP synthase subunit beta (Petrotoga mobilis (strain DSM 10674 / SJ95)).